The sequence spans 537 residues: Putative cysteine ligase BshC (537 aa).

A coiled-coil region spans residues 383–451; it reads MERTQKLLKQ…EVKENQDNFN (69 aa).

This sequence belongs to the BshC family.

Its function is as follows. Involved in bacillithiol (BSH) biosynthesis. May catalyze the last step of the pathway, the addition of cysteine to glucosamine malate (GlcN-Mal) to generate BSH. The protein is Putative cysteine ligase BshC of Staphylococcus haemolyticus (strain JCSC1435).